A 352-amino-acid chain; its full sequence is Trifunctional sesterterpene/triterpene/sesquarterpene synthase (352 aa).

It belongs to the large terpene synthase family.

The enzyme catalyses (2E,6E,10E,14E)-geranylfarnesyl diphosphate = beta-geranylfarnesene + diphosphate. It catalyses the reaction all-trans-hexaprenyl diphosphate = beta-hexaprene + diphosphate. The catalysed reaction is all-trans-heptaprenyl diphosphate = beta-heptaprene + diphosphate. Its function is as follows. Catalyzes the conversion of geranylfarnesyl diphosphate (GFPP) and hexaprenyl diphosphate (HexPP) into beta-geranylfarnesene and beta-hexaprene, respectively. Also produces beta-heptaprene from heptaprenyl diphosphate (HepPP) as a minor product. The protein is Trifunctional sesterterpene/triterpene/sesquarterpene synthase of Shouchella clausii (Alkalihalobacillus clausii).